We begin with the raw amino-acid sequence, 177 residues long: Outer membrane lipoprotein Blc (177 aa).

The first 18 residues, Met1–Ala18, serve as a signal peptide directing secretion. The N-palmitoyl cysteine moiety is linked to residue Cys19. Residue Cys19 is the site of S-diacylglycerol cysteine attachment.

It belongs to the calycin superfamily. Lipocalin family. Homodimer.

The protein resides in the cell outer membrane. In terms of biological role, involved in the storage or transport of lipids necessary for membrane maintenance under stressful conditions. Displays a binding preference for lysophospholipids. The sequence is that of Outer membrane lipoprotein Blc from Citrobacter freundii.